The primary structure comprises 407 residues: Glycolate oxidase iron-sulfur subunit (407 aa).

4Fe-4S ferredoxin-type domains follow at residues 14–47 (RALEADSILRACVHCGFCTATCPTYQLLGDELDG) and 66–95 (LKTQEHLDRCLTCRNCETTCPSGVRYHNLL). Residues cysteine 25, cysteine 28, cysteine 31, cysteine 35, cysteine 75, cysteine 78, cysteine 81, and cysteine 85 each contribute to the [4Fe-4S] cluster site.

As to quaternary structure, the glycolate oxidase likely consists of three subunits, GlcD, GlcE and GlcF. Requires [4Fe-4S] cluster as cofactor.

The protein localises to the cell inner membrane. The enzyme catalyses glycolate + A = glyoxylate + AH2. It catalyses the reaction (R)-lactate + A = pyruvate + AH2. In vitro the glycolate oxidase activity is inhibited by the sulfhydryl inhibitors CuSO4 and PCMB, by KCN, but not by the metal complexing agent EDTA. In terms of biological role, component of a complex that catalyzes the oxidation of glycolate to glyoxylate. Is required for E.coli to grow on glycolate as a sole source of carbon. Is also able to oxidize D-lactate ((R)-lactate) with a similar rate. Does not link directly to O(2), and 2,6-dichloroindophenol (DCIP) and phenazine methosulfate (PMS) can act as artificial electron acceptors in vitro, but the physiological molecule that functions as a primary electron acceptor during glycolate oxidation is unknown. The polypeptide is Glycolate oxidase iron-sulfur subunit (Escherichia coli (strain K12)).